The sequence spans 263 residues: Translation initiation factor 2 subunit alpha (263 aa).

An S1 motif domain is found at Gly-12–Lys-83.

This sequence belongs to the eIF-2-alpha family. As to quaternary structure, heterotrimer composed of an alpha, a beta and a gamma chain.

In terms of biological role, eIF-2 functions in the early steps of protein synthesis by forming a ternary complex with GTP and initiator tRNA. In Sulfurisphaera tokodaii (strain DSM 16993 / JCM 10545 / NBRC 100140 / 7) (Sulfolobus tokodaii), this protein is Translation initiation factor 2 subunit alpha.